The primary structure comprises 208 residues: ATP-dependent Clp protease proteolytic subunit (208 aa).

The Nucleophile role is filled by S106. H131 is an active-site residue.

Belongs to the peptidase S14 family. In terms of assembly, fourteen ClpP subunits assemble into 2 heptameric rings which stack back to back to give a disk-like structure with a central cavity, resembling the structure of eukaryotic proteasomes.

It is found in the cytoplasm. It carries out the reaction Hydrolysis of proteins to small peptides in the presence of ATP and magnesium. alpha-casein is the usual test substrate. In the absence of ATP, only oligopeptides shorter than five residues are hydrolyzed (such as succinyl-Leu-Tyr-|-NHMec, and Leu-Tyr-Leu-|-Tyr-Trp, in which cleavage of the -Tyr-|-Leu- and -Tyr-|-Trp bonds also occurs).. In terms of biological role, cleaves peptides in various proteins in a process that requires ATP hydrolysis. Has a chymotrypsin-like activity. Plays a major role in the degradation of misfolded proteins. The sequence is that of ATP-dependent Clp protease proteolytic subunit from Dinoroseobacter shibae (strain DSM 16493 / NCIMB 14021 / DFL 12).